Here is a 267-residue protein sequence, read N- to C-terminus: Hydroxyethylthiazole kinase (267 aa).

M51 is a substrate binding site. ATP-binding residues include R127 and S173. A200 provides a ligand contact to substrate.

The protein belongs to the Thz kinase family. Mg(2+) serves as cofactor.

It carries out the reaction 5-(2-hydroxyethyl)-4-methylthiazole + ATP = 4-methyl-5-(2-phosphooxyethyl)-thiazole + ADP + H(+). It participates in cofactor biosynthesis; thiamine diphosphate biosynthesis; 4-methyl-5-(2-phosphoethyl)-thiazole from 5-(2-hydroxyethyl)-4-methylthiazole: step 1/1. Functionally, catalyzes the phosphorylation of the hydroxyl group of 4-methyl-5-beta-hydroxyethylthiazole (THZ). This is Hydroxyethylthiazole kinase from Psychromonas ingrahamii (strain DSM 17664 / CCUG 51855 / 37).